A 638-amino-acid chain; its full sequence is Phosphomethylpyrimidine synthase (638 aa).

Substrate contacts are provided by residues Asn236, Met265, Tyr294, His330, 350–352 (SRG), 391–394 (DGLR), and Glu430. His434 contributes to the Zn(2+) binding site. Tyr457 serves as a coordination point for substrate. His498 serves as a coordination point for Zn(2+). The [4Fe-4S] cluster site is built by Cys578, Cys581, and Cys586.

Belongs to the ThiC family. In terms of assembly, homodimer. It depends on [4Fe-4S] cluster as a cofactor.

It catalyses the reaction 5-amino-1-(5-phospho-beta-D-ribosyl)imidazole + S-adenosyl-L-methionine = 4-amino-2-methyl-5-(phosphooxymethyl)pyrimidine + CO + 5'-deoxyadenosine + formate + L-methionine + 3 H(+). It functions in the pathway cofactor biosynthesis; thiamine diphosphate biosynthesis. Catalyzes the synthesis of the hydroxymethylpyrimidine phosphate (HMP-P) moiety of thiamine from aminoimidazole ribotide (AIR) in a radical S-adenosyl-L-methionine (SAM)-dependent reaction. The protein is Phosphomethylpyrimidine synthase of Polaromonas sp. (strain JS666 / ATCC BAA-500).